The primary structure comprises 325 residues: Glycine--tRNA ligase alpha subunit (325 aa).

The protein belongs to the class-II aminoacyl-tRNA synthetase family. Tetramer of two alpha and two beta subunits.

Its subcellular location is the cytoplasm. It catalyses the reaction tRNA(Gly) + glycine + ATP = glycyl-tRNA(Gly) + AMP + diphosphate. This chain is Glycine--tRNA ligase alpha subunit, found in Ralstonia nicotianae (strain ATCC BAA-1114 / GMI1000) (Ralstonia solanacearum).